A 784-amino-acid polypeptide reads, in one-letter code: Lon protease (784 aa).

Positions Ile-11–Ile-204 constitute a Lon N-terminal domain. Gly-356–Thr-363 is an ATP binding site. Positions Glu-592 to Asn-773 constitute a Lon proteolytic domain. Catalysis depends on residues Ser-679 and Lys-722.

The protein belongs to the peptidase S16 family. In terms of assembly, homohexamer. Organized in a ring with a central cavity.

Its subcellular location is the cytoplasm. It catalyses the reaction Hydrolysis of proteins in presence of ATP.. In terms of biological role, ATP-dependent serine protease that mediates the selective degradation of mutant and abnormal proteins as well as certain short-lived regulatory proteins. Required for cellular homeostasis and for survival from DNA damage and developmental changes induced by stress. Degrades polypeptides processively to yield small peptide fragments that are 5 to 10 amino acids long. Binds to DNA in a double-stranded, site-specific manner. The sequence is that of Lon protease from Erwinia amylovora (Fire blight bacteria).